Here is a 566-residue protein sequence, read N- to C-terminus: MTILPKKKPPPPDADPANEPPPPGPLPPAPRRGGGVGVGGGGTGVGGGERDRDSGVVGARPRASPPPQGPLPGPPGALHRWALAVPPGAVAGPRPQQASPPPCGGPGGPGGGPGDALGATTAGVGAAGVVVGVGGPVGVGGCCSGPGHSKRRRQAPGVGAVGGASPEREEVGAGYNSEDEYEAAAARIEAMDPATVEQQEHWFEKALRDKKGFIIKQMKEDGACLFRAVADQVYGDQDMHEVVRKHCMDYLMKNADYFSNYVTEDFTTYINRKRKNNCHGNHIEMQAMAEMYNRPVEVYQYSTEPINTFHGIHQNEDEPIRVSYHRNIHYNSVVNPNKATIGVGLGLPSFKPGFAEQSLMKNAIKTSEESWIEQQMLEDKKRATDWEATNEAIEEQVARESYLQWLRDQEKQARQVRGPSQPRKASATCSSATAAASSGLEEWTSRSPRQRSSASSPEHPELHAELGIKPPSPGTVLALAKPPSPCAPGTSSQFSAGADRATSPLVSLYPALECRALIQQMSPSAFGLNDWDDDEILASVLAVSQQEYLDSMKKNKVHRDPPPDKS.

Disordered stretches follow at residues 1–117 (MTIL…GDAL) and 146–175 (PGHS…GAGY). The span at 11 to 30 (PPDADPANEPPPPGPLPPAP) shows a compositional bias: pro residues. Residues 32–47 (RGGGVGVGGGGTGVGG) are compositionally biased toward gly residues. Residues 63 to 75 (ASPPPQGPLPGPP) are compositionally biased toward pro residues. Serine 64 is subject to Phosphoserine. Residues 84–97 (AVPPGAVAGPRPQQ) show a composition bias toward low complexity. Positions 105-115 (GPGGPGGGPGD) are enriched in gly residues. Position 165 is a phosphoserine (serine 165). Tyrosine 175 carries the post-translational modification Phosphotyrosine. Serine 177 is subject to Phosphoserine. Threonine 195 carries the post-translational modification Phosphothreonine. The region spanning 213-336 (FIIKQMKEDG…NIHYNSVVNP (124 aa)) is the OTU domain. A cys-loop region spans residues 218 to 224 (MKEDGAC). The active site involves aspartate 221. Cysteine 224 serves as the catalytic Nucleophile. The interval 273 to 283 (KRKNNCHGNHI) is variable-loop. Residue serine 323 is modified to Phosphoserine. The interval 324–329 (YHRNIH) is his-loop. The active site involves histidine 329. Serine 332 and serine 370 each carry phosphoserine. The segment at 413-497 (ARQVRGPSQP…PGTSSQFSAG (85 aa)) is disordered. Composition is skewed to low complexity over residues 425–438 (ASAT…AASS) and 445–457 (SRSP…ASSP). At serine 447 the chain carries Phosphoserine. Position 502 is a phosphothreonine (threonine 502). Phosphoserine is present on serine 503.

Belongs to the peptidase C85 family. Interacts with TRAF3. Post-translationally, phosphorylation at Ser-177 is required for deubiquitinating activity. Phosphorylation at Ser-323, Ser-332 and Ser-503 by MTOR promotes its activity.

The protein localises to the nucleus. The catalysed reaction is Thiol-dependent hydrolysis of ester, thioester, amide, peptide and isopeptide bonds formed by the C-terminal Gly of ubiquitin (a 76-residue protein attached to proteins as an intracellular targeting signal).. Its activity is regulated as follows. Inhibited by N-ethyl-maleimide (NEM). Its function is as follows. Deubiquitinating enzyme that functions as a negative regulator of the innate immune system. Has peptidase activity towards 'Lys-48'- and 'Lys-63'-linked polyubiquitin chains. Can also cleave 'Lys-11'-linked ubiquitin chains (in vitro). Acts via TRAF3 deubiquitination and subsequent suppression of type I interferon (IFN) production. Controls neuroectodermal differentiation through cleaving 'Lys-48'-linked ubiquitin chains to counteract degradation of select chromatin regulators such as ARID1A, HDAC2 and HCF1. Acts as a positive regulator of mTORC1 and mTORC2 signaling following phosphorylation by MTOR: acts by mediating deubiquitination of BTRC, leading to its stability. This is OTU domain-containing protein 5 from Rattus norvegicus (Rat).